We begin with the raw amino-acid sequence, 154 residues long: Deoxyuridine 5'-triphosphate nucleotidohydrolase (154 aa).

Substrate-binding positions include 64 to 66 (RSG), Asn77, 81 to 83 (TID), and Lys91.

Belongs to the dUTPase family. In terms of assembly, homotrimer. Mg(2+) is required as a cofactor.

The catalysed reaction is dUTP + H2O = dUMP + diphosphate + H(+). The protein operates within pyrimidine metabolism; dUMP biosynthesis; dUMP from dCTP (dUTP route): step 2/2. This enzyme is involved in nucleotide metabolism: it produces dUMP, the immediate precursor of thymidine nucleotides and it decreases the intracellular concentration of dUTP so that uracil cannot be incorporated into DNA. The chain is Deoxyuridine 5'-triphosphate nucleotidohydrolase from Mycobacterium bovis (strain BCG / Pasteur 1173P2).